Consider the following 183-residue polypeptide: Adenine phosphoribosyltransferase (183 aa).

This sequence belongs to the purine/pyrimidine phosphoribosyltransferase family. In terms of assembly, homodimer.

The protein localises to the cytoplasm. It carries out the reaction AMP + diphosphate = 5-phospho-alpha-D-ribose 1-diphosphate + adenine. Its pathway is purine metabolism; AMP biosynthesis via salvage pathway; AMP from adenine: step 1/1. Functionally, catalyzes a salvage reaction resulting in the formation of AMP, that is energically less costly than de novo synthesis. This is Adenine phosphoribosyltransferase from Shewanella oneidensis (strain ATCC 700550 / JCM 31522 / CIP 106686 / LMG 19005 / NCIMB 14063 / MR-1).